Consider the following 530-residue polypeptide: Poly(U)-binding-splicing factor PUF60 (530 aa).

Residues 1–487 are inhibits homodimerization; it reads MATATIALGT…EDAEIIVKIF (487 aa). Residue Lys-14 forms a Glycyl lysine isopeptide (Lys-Gly) (interchain with G-Cter in SUMO2) linkage. Residue Thr-31 is modified to Phosphothreonine. The tract at residues 48 to 530 is inhibits transcriptional repression, interaction with ERCC3 and apoptosis induction; the sequence is QSIKSVLVKQ…ERFDNSDLSA (483 aa). A Glycyl lysine isopeptide (Lys-Gly) (interchain with G-Cter in SUMO2) cross-link involves residue Lys-51. Ser-83 bears the Phosphoserine mark. 2 consecutive RRM domains span residues 100 to 178 and 197 to 275; these read CRVY…RPSN and NRIY…KAVT. Ser-215 bears the Phosphoserine mark. Lys-222 carries the N6-acetyllysine modification. Thr-285 carries the phosphothreonine modification. The disordered stretch occupies residues 387 to 408; sequence KKEKEEEELFPESERPEMLSEQ. Lys-390 is covalently cross-linked (Glycyl lysine isopeptide (Lys-Gly) (interchain with G-Cter in SUMO2)). Positions 398–408 are enriched in basic and acidic residues; the sequence is ESERPEMLSEQ. At Lys-425 the chain carries N6-acetyllysine. A Glycyl lysine isopeptide (Lys-Gly) (interchain with G-Cter in SUMO2) cross-link involves residue Lys-429. The RRM 3; atypical domain maps to 433–520; the sequence is TVMVLRNMVD…RKVVAEVYDQ (88 aa).

This sequence belongs to the RRM half pint family. In terms of assembly, homodimer. Associates with the spliceosome. Found in a complex with RO60 and Y5 RNA. Found in a complex with FUBP1 and far upstream element (FUSE) DNA segment. Interacts directly with ERCC3. Interacts with CDK7 and GTF2H1. Interacts with SRSF11/P54. Interacts with ARGLU1; interaction may be involved in ARGLU1-mediated modulation of alternative splicing.

It localises to the nucleus. Functionally, DNA- and RNA-binding protein, involved in several nuclear processes such as pre-mRNA splicing, apoptosis and transcription regulation. In association with FUBP1 regulates MYC transcription at the P2 promoter through the core-TFIIH basal transcription factor. Acts as a transcriptional repressor through the core-TFIIH basal transcription factor. Represses FUBP1-induced transcriptional activation but not basal transcription. Decreases ERCC3 helicase activity. Is also involved in pre-mRNA splicing. Promotes splicing of an intron with weak 3'-splice site and pyrimidine tract in a cooperative manner with U2AF2. Involved in apoptosis induction when overexpressed in HeLa cells. Modulates alternative splicing of several mRNAs. Binds to relaxed DNA of active promoter regions. Binds to the pyrimidine tract and 3'-splice site regions of pre-mRNA; binding is enhanced in presence of U2AF2. Binds to Y5 RNA in association with RO60. Binds to poly(U) RNA. This chain is Poly(U)-binding-splicing factor PUF60, found in Bos taurus (Bovine).